Here is a 299-residue protein sequence, read N- to C-terminus: tRNA pseudouridine synthase B (299 aa).

Asp-49 serves as the catalytic Nucleophile. One can recognise a PUA domain in the interval Met-241–Gly-299.

It belongs to the pseudouridine synthase TruB family. Type 1 subfamily.

It catalyses the reaction uridine(55) in tRNA = pseudouridine(55) in tRNA. Its function is as follows. Responsible for synthesis of pseudouridine from uracil-55 in the psi GC loop of transfer RNAs. The protein is tRNA pseudouridine synthase B of Symbiobacterium thermophilum (strain DSM 24528 / JCM 14929 / IAM 14863 / T).